The following is a 160-amino-acid chain: Cytochrome b6-f complex subunit 4 (160 aa).

Helical transmembrane passes span 36 to 56 (LLYV…GLAI), 95 to 115 (LLGI…PFIE), and 131 to 151 (AIFL…TFPI).

The protein belongs to the cytochrome b family. PetD subfamily. The 4 large subunits of the cytochrome b6-f complex are cytochrome b6, subunit IV (17 kDa polypeptide, PetD), cytochrome f and the Rieske protein, while the 4 small subunits are PetG, PetL, PetM and PetN. The complex functions as a dimer.

Its subcellular location is the cellular thylakoid membrane. In terms of biological role, component of the cytochrome b6-f complex, which mediates electron transfer between photosystem II (PSII) and photosystem I (PSI), cyclic electron flow around PSI, and state transitions. The protein is Cytochrome b6-f complex subunit 4 of Microcystis aeruginosa (strain NIES-843 / IAM M-2473).